We begin with the raw amino-acid sequence, 508 residues long: Monocarboxylate transporter 9 (508 aa).

Topologically, residues 1–12 (MEFQKSPDGGWG) are cytoplasmic. The next 12 membrane-spanning stretches (helical) occupy residues 13-33 (WVIVVVSFFTQFLSYGSPLAV), 53-73 (WVGSLASGVGLLASPVCSLFV), 80-100 (PVTIFSGFLVAGGLMLSSLAP), 102-122 (IYFLFFSYGIVVGLGCGLLYT), 137-157 (GLALGLISTGSSVGLFIYAAL), 164-184 (FYGLDGCLLIVGALALNILAC), 303-323 (VFSALFIAILLFDIGGFPPSL), 341-361 (MPLISIFGIMTAVGKLLLGIL), 370-390 (LYLYVATLIITGLALCAIPFA), 396-416 (LAILSGILGFLTGNWSIFPYV), 431-451 (GILMFFAGLGNSLGPPIVGWF), and 460-480 (IAFYFSGFCVLLGGFILLLAI). Residues 481-508 (LPCWDMCNKKLPKPAVPTTFFYKVASNV) lie on the Cytoplasmic side of the membrane.

The protein belongs to the major facilitator superfamily. Monocarboxylate porter (TC 2.A.1.13) family.

It is found in the cell membrane. It catalyses the reaction creatine(in) = creatine(out). The catalysed reaction is (R)-carnitine(in) = (R)-carnitine(out). Extracellular pH-and Na(+)-sensitive low-affinity creatine transporter. Also functions as a pH-independent carnitine efflux transporter. This is Monocarboxylate transporter 9 (Slc16a9) from Mus musculus (Mouse).